The primary structure comprises 152 residues: Ubiquitin-conjugating enzyme E2 W (152 aa).

Residue M1 forms a Peptide (Met-Gly) (interchain with G-Cter in ubiquitin) linkage. One can recognise a UBC core domain in the interval 4 to 152 (AATRRLMKEL…TRWWFHDDSV (149 aa)). The Glycyl thioester intermediate role is filled by C92.

This sequence belongs to the ubiquitin-conjugating enzyme family.

The enzyme catalyses S-ubiquitinyl-[E1 ubiquitin-activating enzyme]-L-cysteine + [E2 ubiquitin-conjugating enzyme]-L-cysteine = [E1 ubiquitin-activating enzyme]-L-cysteine + S-ubiquitinyl-[E2 ubiquitin-conjugating enzyme]-L-cysteine.. It catalyses the reaction S-ubiquitinyl-[E1 ubiquitin-activating enzyme]-L-cysteine + [acceptor protein]-N-terminal-amino acid = [E1 ubiquitin-activating enzyme]-L-cysteine + N-terminal-ubiquitinyl-[acceptor protein].. The protein operates within protein modification; protein ubiquitination. Functionally, accepts ubiquitin from the E1 complex and catalyzes its covalent attachment to other proteins. Together with ubc-18, required for the ubiquitination of membranous organelles, and the removal of paternal mitochondria from early embryos. The chain is Ubiquitin-conjugating enzyme E2 W from Caenorhabditis elegans.